We begin with the raw amino-acid sequence, 472 residues long: Chromosomal replication initiator protein DnaA (472 aa).

The tract at residues 1–80 (MDTKQIWFTT…YQVNVRVIIS (80 aa)) is domain I, interacts with DnaA modulators. The segment at 80–130 (SSATPAPSEPVAVTPSEPSPTTEVAEPSFASFNQAAPMLNQLPLGDPNRSS) is domain II. Positions 131-347 (VLNPRYTFSS…GCLNRVIAYA (217 aa)) are domain III, AAA+ region. The ATP site is built by G175, G177, K178, and T179. Residues 348-472 (NLNRTPVTVE…RQRLYGENAR (125 aa)) are domain IV, binds dsDNA.

It belongs to the DnaA family. In terms of assembly, oligomerizes as a right-handed, spiral filament on DNA at oriC.

It is found in the cytoplasm. Plays an essential role in the initiation and regulation of chromosomal replication. ATP-DnaA binds to the origin of replication (oriC) to initiate formation of the DNA replication initiation complex once per cell cycle. Binds the DnaA box (a 9 base pair repeat at the origin) and separates the double-stranded (ds)DNA. Forms a right-handed helical filament on oriC DNA; dsDNA binds to the exterior of the filament while single-stranded (ss)DNA is stabiized in the filament's interior. The ATP-DnaA-oriC complex binds and stabilizes one strand of the AT-rich DNA unwinding element (DUE), permitting loading of DNA polymerase. After initiation quickly degrades to an ADP-DnaA complex that is not apt for DNA replication. Binds acidic phospholipids. This Herpetosiphon aurantiacus (strain ATCC 23779 / DSM 785 / 114-95) protein is Chromosomal replication initiator protein DnaA.